We begin with the raw amino-acid sequence, 353 residues long: Iron(III) enterobactin esterase (353 aa).

It belongs to the Fes family.

It is found in the cytoplasm. The enzyme catalyses Fe(III)-enterobactin + 3 H2O + H(+) = Fe(III)-[N-(2,3-dihydroxybenzoyl)-L-serine] + 2 N-(2,3-dihydroxybenzoyl)-L-serine. The catalysed reaction is Fe(III)-enterobactin + H2O = Fe(III)-[N-(2,3-dihydroxybenzoyl)-L-serine]3 + H(+). It carries out the reaction Fe(III)-[N-(2,3-dihydroxybenzoyl)-L-serine]3 + H2O + H(+) = Fe(III)-[N-(2,3-dihydroxybenzoyl)-L-serine]2 + N-(2,3-dihydroxybenzoyl)-L-serine. It catalyses the reaction Fe(III)-[N-(2,3-dihydroxybenzoyl)-L-serine]2 + H2O + H(+) = Fe(III)-[N-(2,3-dihydroxybenzoyl)-L-serine] + N-(2,3-dihydroxybenzoyl)-L-serine. Its function is as follows. Catalyzes the hydrolysis of ferric enterobactin (Fe-Ent). Is responsible for the release of iron from ferric enterobactin. This Yersinia enterocolitica protein is Iron(III) enterobactin esterase.